Here is a 448-residue protein sequence, read N- to C-terminus: Iroquois-class homeodomain protein irx-3 (448 aa).

Positions 108-170 form a DNA-binding region, homeobox; TALE-type; it reads DPSRPKNATR…NARRRLKKEN (63 aa). Residues 171-247 are disordered; that stretch reads KMTWAPRSRT…EVSDGFEDLN (77 aa). Residues 195-222 are compositionally biased toward acidic residues; that stretch reads KHEDEEEIDLENIDTEDIESKEDLDDPD. The segment covering 223-237 has biased composition (basic and acidic residues); that stretch reads TDIHSDSKTDTRSDS. Residues 238 to 247 are compositionally biased toward acidic residues; sequence EVSDGFEDLN.

It belongs to the TALE/IRO homeobox family. As to expression, primarily expressed in the developing central nervous system (CNS). At gastrula stage, expressed in both the superficial and deep layers of the presumptive neural plate with expression spreading to the prospective hindbrain, spinal cord and midbrain-hindbrain junction as neurulation proceeds. Not expressed in the anterior neural plate and CNS expression in the tadpole excludes the forebrain. Outside of the CNS, expressed around the closing blastopore at early gastrula stages and as gastrulation proceeds, expression switches to the anterior lateral plate mesoderm. In tadpoles, expressed in the ectodermal layer of the branchial arches, and in the otic vesicle. Also expressed in specific and overlapping dynamic patterns with irx1 and irx2 during pronephric kidney development. Renal expression begins before segment-specific terminal differentiation in the pronephric anlage at mid-neurula stage, and is later found in proximal tubule PT3 as well as intermediate tubule segments IT1 and IT2, with expression in the kidney being maintained through to the tadpole stage.

It is found in the nucleus. Functionally, acts partially redundantly with other irx members in neural patterning. Required for formation of the posterior forebrain, midbrain, hindbrain, and to a lesser extent, spinal cord. Both up-regulates and down-regulates gene expression during neural development. Acts early in neural plate development to induce proneural gene expression and specify a neural precursor state. Also up-regulates repressors that prevent neuronal differentiation. Required during at least two stages of pronephros kidney development; during neurula stages, maintains transcription of key renal genes to define the size and identity of the pronephric anlage, probably in part through regulation of bmp-signaling. Subsequently required for proper formation of the intermediate tubule segment of the pronephros. This is Iroquois-class homeodomain protein irx-3 (irx3) from Xenopus laevis (African clawed frog).